The following is a 354-amino-acid chain: Heat-inducible transcription repressor HrcA (354 aa).

The protein belongs to the HrcA family.

Negative regulator of class I heat shock genes (grpE-dnaK-dnaJ and groELS operons). Prevents heat-shock induction of these operons. The protein is Heat-inducible transcription repressor HrcA of Novosphingobium aromaticivorans (strain ATCC 700278 / DSM 12444 / CCUG 56034 / CIP 105152 / NBRC 16084 / F199).